The following is a 414-amino-acid chain: Na(+)-translocating NADH-quinone reductase subunit B (414 aa).

4 consecutive transmembrane segments (helical) span residues 23–40 (WFAL…PGLV), 56–76 (IMIM…YNAG), 129–149 (FLPI…LFCM), and 164–184 (ILFA…LGIT). The residue at position 236 (T236) is an FMN phosphoryl threonine. Transmembrane regions (helical) follow at residues 268-288 (IPGS…AMIV), 297-317 (IIAG…VVGS), 325-345 (MPWH…FMAT), 358-378 (WWYG…NPAY), and 381-401 (GMML…HVVI).

Belongs to the NqrB/RnfD family. As to quaternary structure, composed of six subunits; NqrA, NqrB, NqrC, NqrD, NqrE and NqrF. Requires FMN as cofactor.

It is found in the cell inner membrane. The enzyme catalyses a ubiquinone + n Na(+)(in) + NADH + H(+) = a ubiquinol + n Na(+)(out) + NAD(+). In terms of biological role, NQR complex catalyzes the reduction of ubiquinone-1 to ubiquinol by two successive reactions, coupled with the transport of Na(+) ions from the cytoplasm to the periplasm. NqrA to NqrE are probably involved in the second step, the conversion of ubisemiquinone to ubiquinol. This Vibrio parahaemolyticus serotype O3:K6 (strain RIMD 2210633) protein is Na(+)-translocating NADH-quinone reductase subunit B.